A 510-amino-acid polypeptide reads, in one-letter code: 2,3-bisphosphoglycerate-independent phosphoglycerate mutase (510 aa).

The Mn(2+) site is built by aspartate 15 and serine 65. The Phosphoserine intermediate role is filled by serine 65. Substrate contacts are provided by residues histidine 126, 155–156 (RD), arginine 187, arginine 193, 259–262 (RPDR), and lysine 332. Residues aspartate 399, histidine 403, aspartate 440, histidine 441, and histidine 458 each contribute to the Mn(2+) site.

This sequence belongs to the BPG-independent phosphoglycerate mutase family. Requires Mn(2+) as cofactor.

It localises to the plastid. The protein localises to the chloroplast. It carries out the reaction (2R)-2-phosphoglycerate = (2R)-3-phosphoglycerate. Its pathway is carbohydrate degradation; glycolysis; pyruvate from D-glyceraldehyde 3-phosphate: step 3/5. Its function is as follows. Catalyzes the interconversion of 2-phosphoglycerate and 3-phosphoglycerate. In Antithamnion sp. (Red alga), this protein is 2,3-bisphosphoglycerate-independent phosphoglycerate mutase.